The primary structure comprises 201 residues: Iron-sulfur flavoprotein AF_1896 (201 aa).

[4Fe-4S] cluster contacts are provided by Cys-46, Cys-49, Cys-52, and Cys-57.

It belongs to the SsuE family. Isf subfamily. As to quaternary structure, homodimer. The cofactor is FMN. [4Fe-4S] cluster is required as a cofactor.

Its function is as follows. Redox-active protein probably involved in electron transport. This Archaeoglobus fulgidus (strain ATCC 49558 / DSM 4304 / JCM 9628 / NBRC 100126 / VC-16) protein is Iron-sulfur flavoprotein AF_1896.